The primary structure comprises 403 residues: E2F transcription factor-like E2FE (403 aa).

The DNA-binding element occupies 34–99 (RKQKSLGLLC…RAKNQYTWKG (66 aa)). The tract at residues 128 to 167 (VKGSDDEDDDEESSQPHSSSQTDSSKPGSLPQSSDPSKID) is disordered. Low complexity predominate over residues 142 to 152 (QPHSSSQTDSS). The segment covering 153-163 (KPGSLPQSSDP) has biased composition (polar residues). A DNA-binding region spans residues 169 to 250 (RREKSLGLLT…SRKPAFKWLG (82 aa)). Positions 282–319 (VKRSKSSSSSQENATERRLKMKKHSTPESSYNKSFDVH) are disordered.

It belongs to the E2F/DP family. Expressed exclusively in mitotically dividing cells. Highly expressed in young leaves and mature flowers. Lower expression in young stalk and in young and mature flowers.

The protein resides in the nucleus. In terms of biological role, inhibitor of E2F-dependent activation of gene expression. Binds specifically the E2 recognition site without interacting with DP proteins and prevents transcription activation by E2F/DP heterodimers. Controls the timing of endocycle onset and inhibits endoreduplication. The sequence is that of E2F transcription factor-like E2FE (E2FE) from Arabidopsis thaliana (Mouse-ear cress).